Reading from the N-terminus, the 196-residue chain is Large ribosomal subunit protein eL15 (196 aa).

Residues Arg159–Lys196 form a disordered region. Over residues Lys179–Lys196 the composition is skewed to basic and acidic residues.

The protein belongs to the eukaryotic ribosomal protein eL15 family.

This is Large ribosomal subunit protein eL15 from Natronomonas pharaonis (strain ATCC 35678 / DSM 2160 / CIP 103997 / JCM 8858 / NBRC 14720 / NCIMB 2260 / Gabara) (Halobacterium pharaonis).